The sequence spans 130 residues: Small ribosomal subunit protein uS9 (130 aa).

The protein belongs to the universal ribosomal protein uS9 family.

In Saccharophagus degradans (strain 2-40 / ATCC 43961 / DSM 17024), this protein is Small ribosomal subunit protein uS9.